The primary structure comprises 1601 residues: PH and SEC7 domain-containing protein (1601 aa).

Residues 1 to 340 (MSEELKVVLR…TGDLILNLSR (340 aa)) are mediates regulation of axon branching and microtubule organization. Residues 6-88 (KVVLRRSEQH…LVTLELKRDP (83 aa)) form the PDZ domain. Disordered stretches follow at residues 113-192 (NIYD…SSTK), 211-322 (TSPT…PAKA), 339-440 (SRTP…SLTN), 459-657 (LEED…SSSG), 737-780 (NSSL…SETA), 872-965 (QQQQ…LLSC), and 1040-1126 (QQLK…SDVE). The segment covering 118 to 128 (HSSSTNSSPNH) has biased composition (polar residues). A compositionally biased stretch (low complexity) spans 166–191 (ASGSTTTTTTATHTHSHSRNSSASST). The span at 283–297 (QSLQHSNSYSGSPVT) shows a compositional bias: polar residues. A compositionally biased stretch (basic and acidic residues) spans 300–311 (RFADREPEREPE). Residues 323 to 340 (PRFEAYMMTGDLILNLSR) carry the Microtubule elimination domain (MTED); Binds tubulin and blocks microtubule polymerization motif. Residues 339–348 (SRTPQTSNPL) show a composition bias toward polar residues. The segment covering 353-362 (KKIDSLRDSP) has biased composition (basic and acidic residues). Low complexity-rich tracts occupy residues 382-399 (SSPT…TSSD), 409-424 (QKQQ…QQQQ), and 468-487 (QRQQ…YEYY). Residues 488–505 (QNEDELEEQEEVEEEREE) show a composition bias toward acidic residues. The span at 510–519 (YDITNIETYQ) shows a compositional bias: polar residues. A compositionally biased stretch (acidic residues) spans 526 to 557 (DDDDSDRQCLVDDDDDDDAYDDEENDAGDEDY). Composition is skewed to polar residues over residues 558–567 (STNSLGSGSA) and 617–630 (TSFS…SLST). The segment covering 640–657 (SVPTSPEPSSLVPESSSG) has biased composition (low complexity). A compositionally biased stretch (polar residues) spans 737-747 (NSSLASNNNEG). Composition is skewed to low complexity over residues 752–780 (NRSS…SETA), 872–942 (QQQQ…QQQQ), 949–965 (GGQV…LLSC), and 1040–1052 (QQLK…QQQQ). A mediates association to the membrane and rescricts the microtubule-inhibiting activity to the cell cortex region spans residues 894 to 1601 (SSSPQHSAVG…PTNRKEKKKK (708 aa)). Over residues 1053–1071 (QRERERDRDRDREQSEHKV) the composition is skewed to basic and acidic residues. The region spanning 1125 to 1291 (VESLHSYHYS…KSLYQAIKTK (167 aa)) is the SEC7 domain. Positions 1332 to 1445 (VEYKKGYVMR…WVETINYVCA (114 aa)) constitute a PH domain. Residues 1544-1601 (LELQAQQPSPASHEEEADTFPVGTTACTPPTPQSINQKDQQKEQQQQQPTNRKEKKKK) form a disordered region. Over residues 1568 to 1579 (TACTPPTPQSIN) the composition is skewed to polar residues.

It belongs to the PSD family. Interacts (via MTED motif) with tubulin. Expressed in the head (at protein level).

Its subcellular location is the cell projection. The protein localises to the axon. It localises to the cytoplasm. It is found in the cell membrane. The protein resides in the cell cortex. Guanine nucleotide exchange factor for Arf6. Regulates axon growth and branching by inhibiting microtubule polymerisation at the cortex. Together with shot, promotes axonal microtubule bundle integrity. Required for normal ethanol-induced tolerance and preference. Probably by activating Arf6, counteracts ethanol-induced sedation. The protein is PH and SEC7 domain-containing protein of Drosophila melanogaster (Fruit fly).